Reading from the N-terminus, the 179-residue chain is Large ribosomal subunit protein uL5 (179 aa).

It belongs to the universal ribosomal protein uL5 family. As to quaternary structure, part of the 50S ribosomal subunit; part of the 5S rRNA/L5/L18/L25 subcomplex. Contacts the 5S rRNA and the P site tRNA. Forms a bridge to the 30S subunit in the 70S ribosome.

This is one of the proteins that bind and probably mediate the attachment of the 5S RNA into the large ribosomal subunit, where it forms part of the central protuberance. In the 70S ribosome it contacts protein S13 of the 30S subunit (bridge B1b), connecting the 2 subunits; this bridge is implicated in subunit movement. Contacts the P site tRNA; the 5S rRNA and some of its associated proteins might help stabilize positioning of ribosome-bound tRNAs. The protein is Large ribosomal subunit protein uL5 of Rickettsia bellii (strain OSU 85-389).